Consider the following 180-residue polypeptide: ATP synthase subunit b 2 (180 aa).

Residues 33–53 traverse the membrane as a helical segment; the sequence is IFWLLVTLVAIYFLLTRVALP.

The protein belongs to the ATPase B chain family. As to quaternary structure, F-type ATPases have 2 components, F(1) - the catalytic core - and F(0) - the membrane proton channel. F(1) has five subunits: alpha(3), beta(3), gamma(1), delta(1), epsilon(1). F(0) has three main subunits: a(1), b(2) and c(10-14). The alpha and beta chains form an alternating ring which encloses part of the gamma chain. F(1) is attached to F(0) by a central stalk formed by the gamma and epsilon chains, while a peripheral stalk is formed by the delta and b chains.

The protein localises to the cell inner membrane. F(1)F(0) ATP synthase produces ATP from ADP in the presence of a proton or sodium gradient. F-type ATPases consist of two structural domains, F(1) containing the extramembraneous catalytic core and F(0) containing the membrane proton channel, linked together by a central stalk and a peripheral stalk. During catalysis, ATP synthesis in the catalytic domain of F(1) is coupled via a rotary mechanism of the central stalk subunits to proton translocation. Functionally, component of the F(0) channel, it forms part of the peripheral stalk, linking F(1) to F(0). The b'-subunit is a diverged and duplicated form of b found in plants and photosynthetic bacteria. This chain is ATP synthase subunit b 2 (atpF2), found in Cereibacter sphaeroides (strain ATCC 17029 / ATH 2.4.9) (Rhodobacter sphaeroides).